The following is a 446-amino-acid chain: Ribosomal protein uS12 methylthiotransferase RimO (446 aa).

The MTTase N-terminal domain maps to 7–118 (PKIAFAHLGC…IVEVIERVER (112 aa)). Cysteine 16, cysteine 52, cysteine 81, cysteine 156, cysteine 160, and cysteine 163 together coordinate [4Fe-4S] cluster. The Radical SAM core domain maps to 142 to 371 (TTPAPVAYLR…MELQQPIAQR (230 aa)). The 67-residue stretch at 374-440 (AAEVGKIVPV…IYDLYGIIPA (67 aa)) folds into the TRAM domain.

It belongs to the methylthiotransferase family. RimO subfamily. Requires [4Fe-4S] cluster as cofactor.

It localises to the cytoplasm. It catalyses the reaction L-aspartate(89)-[ribosomal protein uS12]-hydrogen + (sulfur carrier)-SH + AH2 + 2 S-adenosyl-L-methionine = 3-methylsulfanyl-L-aspartate(89)-[ribosomal protein uS12]-hydrogen + (sulfur carrier)-H + 5'-deoxyadenosine + L-methionine + A + S-adenosyl-L-homocysteine + 2 H(+). Functionally, catalyzes the methylthiolation of an aspartic acid residue of ribosomal protein uS12. This chain is Ribosomal protein uS12 methylthiotransferase RimO, found in Thermosynechococcus vestitus (strain NIES-2133 / IAM M-273 / BP-1).